A 186-amino-acid polypeptide reads, in one-letter code: Shikimate kinase (186 aa).

Residue Gly-21 to Thr-26 participates in ATP binding. Thr-25 contributes to the Mg(2+) binding site. Substrate contacts are provided by Asp-43, Arg-67, and Gly-90. ATP is bound at residue Arg-129. Arg-147 serves as a coordination point for substrate.

The protein belongs to the shikimate kinase family. Monomer. The cofactor is Mg(2+).

Its subcellular location is the cytoplasm. It catalyses the reaction shikimate + ATP = 3-phosphoshikimate + ADP + H(+). It functions in the pathway metabolic intermediate biosynthesis; chorismate biosynthesis; chorismate from D-erythrose 4-phosphate and phosphoenolpyruvate: step 5/7. Functionally, catalyzes the specific phosphorylation of the 3-hydroxyl group of shikimic acid using ATP as a cosubstrate. The sequence is that of Shikimate kinase from Bacillus subtilis (strain 168).